The primary structure comprises 460 residues: ATP synthase subunit beta (460 aa).

150–157 contacts ATP; sequence GGAGVGKT.

It belongs to the ATPase alpha/beta chains family. In terms of assembly, F-type ATPases have 2 components, CF(1) - the catalytic core - and CF(0) - the membrane proton channel. CF(1) has five subunits: alpha(3), beta(3), gamma(1), delta(1), epsilon(1). CF(0) has three main subunits: a(1), b(2) and c(9-12). The alpha and beta chains form an alternating ring which encloses part of the gamma chain. CF(1) is attached to CF(0) by a central stalk formed by the gamma and epsilon chains, while a peripheral stalk is formed by the delta and b chains.

It is found in the cell inner membrane. The catalysed reaction is ATP + H2O + 4 H(+)(in) = ADP + phosphate + 5 H(+)(out). Produces ATP from ADP in the presence of a proton gradient across the membrane. The catalytic sites are hosted primarily by the beta subunits. This Sodalis glossinidius (strain morsitans) protein is ATP synthase subunit beta.